The sequence spans 233 residues: Nickel import system ATP-binding protein NikE (233 aa).

Residues Ile2–Val228 form the ABC transporter domain. An ATP-binding site is contributed by Gly35 to Ser42.

Belongs to the ABC transporter superfamily. As to quaternary structure, the complex is composed of two ATP-binding proteins (NikD and NikE), two transmembrane proteins (NikB and NikC) and a solute-binding protein (NikA).

It localises to the cell membrane. The enzyme catalyses Ni(2+)(out) + ATP + H2O = Ni(2+)(in) + ADP + phosphate + H(+). Its function is as follows. Part of the ABC transporter complex NikABCDE (Opp2) involved in nickel import. Probably responsible for energy coupling to the transport system. This Staphylococcus aureus (strain Mu50 / ATCC 700699) protein is Nickel import system ATP-binding protein NikE.